The following is a 555-amino-acid chain: 6-phosphofructo-2-kinase/fructose-2,6-bisphosphatase 3 (555 aa).

The tract at residues 1 to 245 is 6-phosphofructo-2-kinase; that stretch reads MPLELTQSRV…VYYLMNIHVQ (245 aa). 42 to 50 contacts ATP; the sequence is GLPARGKTY. Beta-D-fructose 6-phosphate is bound by residues Arg75 and Arg99. Asp125 is a catalytic residue. Thr127 and Arg133 together coordinate beta-D-fructose 6-phosphate. The active site involves Cys155. 164–169 contacts ATP; it reads NIMEVK. 3 residues coordinate beta-D-fructose 6-phosphate: Lys169, Arg190, and Tyr194. The interval 246-555 is fructose-2,6-bisphosphatase; the sequence is PRTIYLCRHG…CHIFSKFSPY (310 aa). Arg253 is a binding site for beta-D-fructose 2,6-bisphosphate. His254 acts as the Tele-phosphohistidine intermediate in catalysis. Residues Asn260 and Gly266 each contribute to the beta-D-fructose 2,6-bisphosphate site. Glu323 acts as the Proton donor/acceptor in catalysis. Tyr334, Arg348, Lys352, Tyr363, Gln389, and Arg393 together coordinate beta-D-fructose 2,6-bisphosphate. 345-348 contributes to the ATP binding site; sequence YALR. ATP contacts are provided by residues 389 to 393 and Tyr425; that span reads QAVLR. The tract at residues 475-504 is disordered; the sequence is KQDAKKGPNPLMRRNSVTPLASPEPTKKPR. Ser490 is modified (phosphoserine; by AMPK and PKA). Thr492 is subject to Phosphothreonine. At Ser496 the chain carries Phosphoserine.

It in the C-terminal section; belongs to the phosphoglycerate mutase family. As to quaternary structure, homodimer. Forms a heterodimer with PFKFB2. In terms of processing, phosphorylation by AMPK stimulates activity.

It carries out the reaction beta-D-fructose 2,6-bisphosphate + H2O = beta-D-fructose 6-phosphate + phosphate. It catalyses the reaction beta-D-fructose 6-phosphate + ATP = beta-D-fructose 2,6-bisphosphate + ADP + H(+). Functionally, catalyzes both the synthesis and degradation of fructose 2,6-bisphosphate. The chain is 6-phosphofructo-2-kinase/fructose-2,6-bisphosphatase 3 (Pfkfb3) from Rattus norvegicus (Rat).